A 178-amino-acid polypeptide reads, in one-letter code: Caveolin-1 (178 aa).

Serine 2 carries the N-acetylserine modification. Phosphoserine is present on serine 2. Positions 2–94 are required for homooligomerization; the sequence is SGGKYVDSEG…WKASFTTFTV (93 aa). Topologically, residues 2-104 are cytoplasmic; it reads SGGKYVDSEG…TKYWFYRLLS (103 aa). Lysine 5 is modified (N6-acetyllysine; alternate). Lysine 5 is covalently cross-linked (Glycyl lysine isopeptide (Lys-Gly) (interchain with G-Cter in ubiquitin); alternate). Tyrosine 6 bears the Phosphotyrosine mark. A Phosphoserine modification is found at serine 9. The residue at position 14 (tyrosine 14) is a Phosphotyrosine; by ABL1. At tyrosine 25 the chain carries Phosphotyrosine. Residues lysine 26 and lysine 30 each participate in a glycyl lysine isopeptide (Lys-Gly) (interchain with G-Cter in ubiquitin) cross-link. Serine 37 carries the post-translational modification Phosphoserine. Glycyl lysine isopeptide (Lys-Gly) (interchain with G-Cter in ubiquitin) cross-links involve residues lysine 39, lysine 47, and lysine 57. Residues 82-94 form an interaction with CAVIN3 region; the sequence is DGIWKASFTTFTV. The segment at residues 105–125 is an intramembrane region (helical); sequence ALFGIPMALIWGIYFAILSFL. The Cytoplasmic segment spans residues 126 to 178; sequence HIWAVVPCIKSFLIEIQCISRVYSIYIHTVCDPLFEAIGKIFSNVRISLQKEI. Residues 131 to 142 are interacts with SPRY1, SPRY2, SPRY3 and SPRY4; sequence VPCIKSFLIEIQ. Residues cysteine 133, cysteine 143, and cysteine 156 are each lipidated (S-palmitoyl cysteine). The segment at 149 to 160 is interacts with SPRY1, SPRY2, and SPRY4; the sequence is SIYIHTVCDPLF. The interval 167–178 is interacts with SPRY1, SPRY2, SPRY3 and SPRY4; it reads FSNVRISLQKEI.

The protein belongs to the caveolin family. Homooligomer. Interacts with GLIPR2. Interacts with NOSTRIN. Interacts with SNAP25 and STX1A. Interacts (via the N-terminus) with DPP4; the interaction is direct. Interacts with CTNNB1, CDH1 and JUP. Interacts with PACSIN2; this interaction induces membrane tubulation. Interacts with SLC7A9. Interacts with BMX and BTK. Interacts with TGFBR1. Interacts with CAVIN3 (via leucine-zipper domain) in a cholesterol-sensitive manner. Interacts with CAVIN1. Interacts with EHD2 in a cholesterol-dependent manner. Forms a ternary complex with UBXN6 and VCP; mediates CAV1 targeting to lysosomes for degradation. Interacts with ABCG1; this interaction regulates ABCG1-mediated cholesterol efflux. Interacts with NEU3; this interaction enhances NEU3 sialidase activity within caveola. Interacts (via C-terminus) with SPRY1, SPRY2 (via C-terminus), SPRY3, and SPRY4. Interacts with IGFBP5; this interaction allows trafficking of IGFBP5 from the plasma membrane to the nucleus. Phosphorylated at Tyr-14 by ABL1 in response to oxidative stress. Post-translationally, ubiquitinated. Undergo monoubiquitination and multi- and/or polyubiquitination. Monoubiquitination of N-terminal lysines promotes integration in a ternary complex with UBXN6 and VCP which promotes oligomeric CAV1 targeting to lysosomes for degradation. Ubiquitinated by ZNRF1; leading to degradation and modulation of the TLR4-mediated immune response.

It localises to the golgi apparatus membrane. It is found in the cell membrane. Its subcellular location is the membrane. The protein resides in the caveola. The protein localises to the membrane raft. Its function is as follows. May act as a scaffolding protein within caveolar membranes. Forms a stable heterooligomeric complex with CAV2 that targets to lipid rafts and drives caveolae formation. Mediates the recruitment of CAVIN proteins (CAVIN1/2/3/4) to the caveolae. Interacts directly with G-protein alpha subunits and can functionally regulate their activity. Involved in the costimulatory signal essential for T-cell receptor (TCR)-mediated T-cell activation. Its binding to DPP4 induces T-cell proliferation and NF-kappa-B activation in a T-cell receptor/CD3-dependent manner. Recruits CTNNB1 to caveolar membranes and may regulate CTNNB1-mediated signaling through the Wnt pathway. Negatively regulates TGFB1-mediated activation of SMAD2/3 by mediating the internalization of TGFBR1 from membrane rafts leading to its subsequent degradation. Binds 20(S)-hydroxycholesterol (20(S)-OHC). The sequence is that of Caveolin-1 (CAV1) from Aotus nancymaae (Ma's night monkey).